Consider the following 467-residue polypeptide: 3-isopropylmalate dehydratase large subunit (467 aa).

Residues cysteine 348, cysteine 409, and cysteine 412 each coordinate [4Fe-4S] cluster.

The protein belongs to the aconitase/IPM isomerase family. LeuC type 1 subfamily. As to quaternary structure, heterodimer of LeuC and LeuD. Requires [4Fe-4S] cluster as cofactor.

The catalysed reaction is (2R,3S)-3-isopropylmalate = (2S)-2-isopropylmalate. The protein operates within amino-acid biosynthesis; L-leucine biosynthesis; L-leucine from 3-methyl-2-oxobutanoate: step 2/4. In terms of biological role, catalyzes the isomerization between 2-isopropylmalate and 3-isopropylmalate, via the formation of 2-isopropylmaleate. The sequence is that of 3-isopropylmalate dehydratase large subunit from Thiobacillus denitrificans (strain ATCC 25259 / T1).